The primary structure comprises 847 residues: Alpha-glucuronidase A (847 aa).

An N-terminal signal peptide occupies residues 1 to 22 (MRSFLLLTALLGVAAVAEDGLA). 13 N-linked (GlcNAc...) asparagine glycosylation sites follow: asparagine 48, asparagine 78, asparagine 227, asparagine 315, asparagine 349, asparagine 457, asparagine 472, asparagine 534, asparagine 583, asparagine 689, asparagine 738, asparagine 739, and asparagine 769.

The protein belongs to the glycosyl hydrolase 67 family.

Its subcellular location is the secreted. The enzyme catalyses an alpha-D-glucuronoside + H2O = D-glucuronate + an alcohol. Functionally, alpha-glucuronidase involved in the hydrolysis of xylan, a major structural heterogeneous polysaccharide found in plant biomass representing the second most abundant polysaccharide in the biosphere, after cellulose. Releases 4-O-methylglucuronic acid from xylan. In Emericella nidulans (strain FGSC A4 / ATCC 38163 / CBS 112.46 / NRRL 194 / M139) (Aspergillus nidulans), this protein is Alpha-glucuronidase A (aguA).